Consider the following 678-residue polypeptide: Penicillin-binding protein activator LpoA (678 aa).

Residues Met-1–Gly-26 form the signal peptide. Cys-27 carries the N-palmitoyl cysteine lipid modification. Cys-27 carries the S-diacylglycerol cysteine lipid modification. Disordered regions lie at residues Asp-302–Ala-340 and Ala-496–Phe-528. 2 stretches are compositionally biased toward low complexity: residues Gln-330–Ala-340 and Thr-513–Phe-528.

The protein belongs to the LpoA family. In terms of assembly, interacts with PBP1a.

It localises to the cell outer membrane. In terms of biological role, regulator of peptidoglycan synthesis that is essential for the function of penicillin-binding protein 1A (PBP1a). The polypeptide is Penicillin-binding protein activator LpoA (Shigella sonnei (strain Ss046)).